A 197-amino-acid chain; its full sequence is MEKYLHLLSRGDKIGLTLIRLSIAIVFMWIGLLKFVPYEADSITPFVANSPLMSFFYEHPEDYKQYLTHEGEYKPEARAWQTANNTYGFSNGLGVVEVIIALLVLANPVNRWLGLLGGLMAFTTPLVTLSFLITTPEAWVPALGDAHHGFPYLSGAGRLVLKDTLMLAGAVMIMADSAREILKQRSNESSSTLKTEY.

Residues 1–15 (MEKYLHLLSRGDKIG) are Periplasmic-facing. Residues 16-36 (LTLIRLSIAIVFMWIGLLKFV) traverse the membrane as a helical segment. Topologically, residues 37–85 (PYEADSITPFVANSPLMSFFYEHPEDYKQYLTHEGEYKPEARAWQTANN) are cytoplasmic. Residues 86 to 106 (TYGFSNGLGVVEVIIALLVLA) form a helical membrane-spanning segment. Topologically, residues 107-112 (NPVNRW) are periplasmic. Residues 113–133 (LGLLGGLMAFTTPLVTLSFLI) traverse the membrane as a helical segment. The Cytoplasmic portion of the chain corresponds to 134-197 (TTPEAWVPAL…ESSSTLKTEY (64 aa)).

Its subcellular location is the cell inner membrane. Functionally, probably involved in reactive chlorine species (RCS) stress resistance. This chain is Inner membrane protein RclC (rclC), found in Escherichia coli (strain K12).